Reading from the N-terminus, the 268-residue chain is Glucosamine-6-phosphate deaminase (268 aa).

The active-site Proton acceptor; for enolization step is the Asp67. Asn136 functions as the For ring-opening step in the catalytic mechanism. The active-site Proton acceptor; for ring-opening step is His138. Residue Glu143 is the For ring-opening step of the active site.

Belongs to the glucosamine/galactosamine-6-phosphate isomerase family. NagB subfamily. Homohexamer.

The catalysed reaction is alpha-D-glucosamine 6-phosphate + H2O = beta-D-fructose 6-phosphate + NH4(+). It functions in the pathway amino-sugar metabolism; N-acetylneuraminate degradation; D-fructose 6-phosphate from N-acetylneuraminate: step 5/5. Its function is as follows. Catalyzes the reversible isomerization-deamination of glucosamine 6-phosphate (GlcN6P) to form fructose 6-phosphate (Fru6P) and ammonium ion. This is Glucosamine-6-phosphate deaminase from Shewanella loihica (strain ATCC BAA-1088 / PV-4).